We begin with the raw amino-acid sequence, 460 residues long: Chromosomal replication initiator protein DnaA (460 aa).

The domain I, interacts with DnaA modulators stretch occupies residues 1–78 (MENFWQACSA…VPVEVQFVLD (78 aa)). Positions 78 to 123 (DPRLVAARRPAAQASVVSDRADDVPSNVLEPIPSNATDHTPRRDQS) are domain II. Positions 124-340 (RINTALTFDS…GALRKILAYS (217 aa)) are domain III, AAA+ region. The ATP site is built by Gly168, Gly170, Lys171, and Thr172. The tract at residues 341 to 460 (RFHGKDITIE…LHVLEQTLKG (120 aa)) is domain IV, binds dsDNA.

This sequence belongs to the DnaA family. As to quaternary structure, oligomerizes as a right-handed, spiral filament on DNA at oriC.

The protein resides in the cytoplasm. Functionally, plays an essential role in the initiation and regulation of chromosomal replication. ATP-DnaA binds to the origin of replication (oriC) to initiate formation of the DNA replication initiation complex once per cell cycle. Binds the DnaA box (a 9 base pair repeat at the origin) and separates the double-stranded (ds)DNA. Forms a right-handed helical filament on oriC DNA; dsDNA binds to the exterior of the filament while single-stranded (ss)DNA is stabiized in the filament's interior. The ATP-DnaA-oriC complex binds and stabilizes one strand of the AT-rich DNA unwinding element (DUE), permitting loading of DNA polymerase. After initiation quickly degrades to an ADP-DnaA complex that is not apt for DNA replication. Binds acidic phospholipids. The chain is Chromosomal replication initiator protein DnaA from Herminiimonas arsenicoxydans.